Here is a 983-residue protein sequence, read N- to C-terminus: Anion exchange protein 4 (983 aa).

Residues 1-48 (MEMKLPGQEGFEASSAPRNIPSGELDSNPDPGTGPSPDGPSDTESKEL) are disordered. N-linked (GlcNAc...) asparagine glycosylation occurs at N183. Disordered stretches follow at residues 186–205 (TGTR…DNEE) and 332–357 (RIPP…RGPA). A run of 4 helical transmembrane segments spans residues 415–435 (AVLY…GLLG), 443–463 (GVLE…LMAG), 500–520 (VGIW…SVLV), and 530–550 (GFCA…MLNL). Residues 415 to 983 (AVLYIYLATV…KAPEINISVN (569 aa)) form a membrane (anion exchange) region. Residues N576 and N600 are each glycosylated (N-linked (GlcNAc...) asparagine). The next 7 helical transmembrane spans lie at 624–644 (VPDI…FAMA), 665–685 (FSSV…GLAT), 712–732 (PWWW…LIFM), 758–778 (LFCV…WYVS), 815–835 (GLVV…LKFI), 837–857 (MPVL…SIQF), and 899–919 (LWII…LGLV). The span at 946–957 (RSIPEKGLEPEH) shows a compositional bias: basic and acidic residues. The interval 946–983 (RSIPEKGLEPEHSFSGSDSEDSELMYQPKAPEINISVN) is disordered. N-linked (GlcNAc...) asparagine glycosylation occurs at N979.

This sequence belongs to the anion exchanger (TC 2.A.31) family. As to expression, kidney specific.

It is found in the basolateral cell membrane. The catalysed reaction is 2 hydrogencarbonate(out) + chloride(in) + Na(+)(out) = 2 hydrogencarbonate(in) + chloride(out) + Na(+)(in). It carries out the reaction K(+)(in) + 2 hydrogencarbonate(in) + chloride(out) = K(+)(out) + 2 hydrogencarbonate(out) + chloride(in). It catalyses the reaction Li(+)(in) + 2 hydrogencarbonate(in) + chloride(out) = Li(+)(out) + 2 hydrogencarbonate(out) + chloride(in). The enzyme catalyses Rb(+)(in) + 2 hydrogencarbonate(in) + chloride(out) = Rb(+)(out) + 2 hydrogencarbonate(out) + chloride(in). The catalysed reaction is Cs(+)(in) + 2 hydrogencarbonate(in) + chloride(out) = Cs(+)(out) + 2 hydrogencarbonate(out) + chloride(in). Electroneutral Cl(-)/HCO3(-) antiporter that favors chloride ion entry and efflux of hydrogencarbonate and sodium ion across the basolateral membrane and may participate in salivary secretion. Also mediates Cl(-)/HCO3(-) exchange activity in the presence of K(+) as well as Cs(+), Li(+), and Rb(+). Does not contribute to Cl(-)/HCO3(-) exchanger in the apical membrane of the upper villous epithelium. This Homo sapiens (Human) protein is Anion exchange protein 4.